An 87-amino-acid chain; its full sequence is Small ribosomal subunit protein eS21 (87 aa).

It belongs to the eukaryotic ribosomal protein eS21 family. In terms of assembly, component of the small ribosomal subunit. Mature ribosomes consist of a small (40S) and a large (60S) subunit. The 40S subunit contains about 33 different proteins and 1 molecule of RNA (18S). The 60S subunit contains about 49 different proteins and 3 molecules of RNA (25S, 5.8S and 5S).

The protein resides in the cytoplasm. Functionally, required for the processing of the 20S rRNA-precursor to mature 18S rRNA in a late step of the maturation of 40S ribosomal subunits. Has a physiological role leading to 18S rRNA stability. The chain is Small ribosomal subunit protein eS21 (RPS21) from Kluyveromyces lactis (strain ATCC 8585 / CBS 2359 / DSM 70799 / NBRC 1267 / NRRL Y-1140 / WM37) (Yeast).